The chain runs to 179 residues: Casparian strip membrane protein 1 (179 aa).

Topologically, residues M1–A17 are cytoplasmic. A helical transmembrane segment spans residues I18–I38. At A39 to T67 the chain is on the extracellular side. A glycan (N-linked (GlcNAc...) asparagine) is linked at N44. The chain crosses the membrane as a helical span at residues F68–I88. Over L89–R100 the chain is Cytoplasmic. Residues V101–A121 traverse the membrane as a helical segment. The Extracellular portion of the chain corresponds to T122–S154. The helical transmembrane segment at L155 to A175 threads the bilayer. The Cytoplasmic portion of the chain corresponds to L176 to R179.

It belongs to the Casparian strip membrane proteins (CASP) family. As to quaternary structure, homodimer and heterodimers.

Its subcellular location is the cell membrane. Functionally, regulates membrane-cell wall junctions and localized cell wall deposition. Required for establishment of the Casparian strip membrane domain (CSD) and the subsequent formation of Casparian strips, a cell wall modification of the root endodermis that determines an apoplastic barrier between the intraorganismal apoplasm and the extraorganismal apoplasm and prevents lateral diffusion. The polypeptide is Casparian strip membrane protein 1 (Lactuca sativa (Garden lettuce)).